A 562-amino-acid polypeptide reads, in one-letter code: MKAPLRALICQGIEALRSNGTLPTNTLPPDFVVERPKTRKHGDFATNVAMLLSKATGSNPRLLAQTLVAALPTSADIARIEIAGPGFINFHMHPVAYQHETINVLKQDNDYGRNLSGQSRTVGVEYVSANPTGPLHVGHGRAAAIGDCLARLLEANGWNVKREFYYNDAGVQIDNLVRSVQARARGLKPGDALWPTDAYNGEYIADIAKAYLAGDSINMVDTIITSTKNVDDTAAIHHFAVNYLRNEQNHDLAAFNVDFDIYFLESSLYKDGKVEETVQKLINSGHTYEEGGALWLKSTHFGDDKDRVMRKSDGSYTYFVPDIAYHLSKWQRGYERAITELGADHHGSLARVHAGLQALEIGIPPGWPEYVLHQMVTVMRGGEEVKLSKRSGGYVTLRDLIEETSTDATRWFLIARKPDSQLTFDIDLARQKSNDNPVFYVQYAYARVCSLMHQAHEKNLNYDQTSGMASLDQLSDNTSLCLMIEISRYPEIVQIACELLEPHLIAQYLRELAHAFHTWYHNTPVLVENAVERNAKLTLACATRQVLANGLNLLGVGTPEKM.

Positions 129–139 match the 'HIGH' region motif; the sequence is ANPTGPLHVGH.

This sequence belongs to the class-I aminoacyl-tRNA synthetase family. Monomer.

It is found in the cytoplasm. The enzyme catalyses tRNA(Arg) + L-arginine + ATP = L-arginyl-tRNA(Arg) + AMP + diphosphate. This chain is Arginine--tRNA ligase, found in Xylella fastidiosa (strain M12).